Reading from the N-terminus, the 236-residue chain is Phosphoribosylaminoimidazole-succinocarboxamide synthase (236 aa).

This sequence belongs to the SAICAR synthetase family.

The enzyme catalyses 5-amino-1-(5-phospho-D-ribosyl)imidazole-4-carboxylate + L-aspartate + ATP = (2S)-2-[5-amino-1-(5-phospho-beta-D-ribosyl)imidazole-4-carboxamido]succinate + ADP + phosphate + 2 H(+). It participates in purine metabolism; IMP biosynthesis via de novo pathway; 5-amino-1-(5-phospho-D-ribosyl)imidazole-4-carboxamide from 5-amino-1-(5-phospho-D-ribosyl)imidazole-4-carboxylate: step 1/2. The chain is Phosphoribosylaminoimidazole-succinocarboxamide synthase from Chlorobium limicola (strain DSM 245 / NBRC 103803 / 6330).